A 395-amino-acid polypeptide reads, in one-letter code: Xylose isomerase (395 aa).

Catalysis depends on residues His-54 and Glu-57. The interval 80–108 (AVPAGAGRDRHEGADGDDEPVHAPGCSRD) is disordered. Residues Glu-189, Glu-225, His-228, Asp-253, Asp-263, Asp-265, and Asp-295 each contribute to the Mg(2+) site.

It belongs to the xylose isomerase family. As to quaternary structure, homotetramer. Requires Mg(2+) as cofactor.

Its subcellular location is the cytoplasm. It carries out the reaction alpha-D-xylose = alpha-D-xylulofuranose. In Streptomyces lividans, this protein is Xylose isomerase.